Reading from the N-terminus, the 339-residue chain is NADH-quinone oxidoreductase subunit H (339 aa).

Transmembrane regions (helical) follow at residues 9–29 (IFPL…LILC), 50–70 (PNVV…KLLF), 82–102 (ILFV…WAVI), 115–135 (VGVL…IIAG), 161–181 (MGLV…SQIV), 187–207 (MPWW…ISVL), 235–255 (MGFA…SAMT), 275–295 (IPGF…FLWI), and 311–331 (GWKV…SVLI).

This sequence belongs to the complex I subunit 1 family. As to quaternary structure, NDH-1 is composed of 14 different subunits. Subunits NuoA, H, J, K, L, M, N constitute the membrane sector of the complex.

The protein resides in the cell inner membrane. It carries out the reaction a quinone + NADH + 5 H(+)(in) = a quinol + NAD(+) + 4 H(+)(out). NDH-1 shuttles electrons from NADH, via FMN and iron-sulfur (Fe-S) centers, to quinones in the respiratory chain. The immediate electron acceptor for the enzyme in this species is believed to be ubiquinone. Couples the redox reaction to proton translocation (for every two electrons transferred, four hydrogen ions are translocated across the cytoplasmic membrane), and thus conserves the redox energy in a proton gradient. This subunit may bind ubiquinone. This chain is NADH-quinone oxidoreductase subunit H, found in Rickettsia bellii (strain RML369-C).